The primary structure comprises 269 residues: Flagellar brake protein YcgR (269 aa).

The segment at 1 to 42 (MLREPMNQHDAPGPAETGADSDAETDAETDAETDAGAADDRY) is disordered. Residues 19 to 33 (ADSDAETDAETDAET) are compositionally biased toward acidic residues. The PilZ domain occupies 149–261 (QRRRHFRART…MENFLQRLVF (113 aa)).

It belongs to the YcgR family. As to quaternary structure, monomer. Interacts with the flagellar basal bodies.

It is found in the bacterial flagellum basal body. Functionally, acts as a flagellar brake, regulating swimming and swarming in a bis-(3'-5') cyclic diguanylic acid (c-di-GMP)-dependent manner. Binds 1 c-di-GMP dimer per subunit. Increasing levels of c-di-GMP lead to decreased motility. This Cupriavidus taiwanensis (strain DSM 17343 / BCRC 17206 / CCUG 44338 / CIP 107171 / LMG 19424 / R1) (Ralstonia taiwanensis (strain LMG 19424)) protein is Flagellar brake protein YcgR.